A 132-amino-acid polypeptide reads, in one-letter code: D-ribose pyranase (132 aa).

Catalysis depends on His-20, which acts as the Proton donor. Substrate-binding positions include Asp-28, His-99, and 121–123 (YSN).

This sequence belongs to the RbsD / FucU family. RbsD subfamily. As to quaternary structure, homodecamer.

Its subcellular location is the cytoplasm. It carries out the reaction beta-D-ribopyranose = beta-D-ribofuranose. It functions in the pathway carbohydrate metabolism; D-ribose degradation; D-ribose 5-phosphate from beta-D-ribopyranose: step 1/2. Catalyzes the interconversion of beta-pyran and beta-furan forms of D-ribose. This is D-ribose pyranase from Streptococcus uberis (strain ATCC BAA-854 / 0140J).